Reading from the N-terminus, the 297-residue chain is Phosphatidylserine decarboxylase proenzyme (297 aa).

Catalysis depends on charge relay system; for autoendoproteolytic cleavage activity residues Asp92, His149, and Ser254. Residue Ser254 is the Schiff-base intermediate with substrate; via pyruvic acid; for decarboxylase activity of the active site. A Pyruvic acid (Ser); by autocatalysis modification is found at Ser254.

It belongs to the phosphatidylserine decarboxylase family. PSD-B subfamily. Prokaryotic type I sub-subfamily. Heterodimer of a large membrane-associated beta subunit and a small pyruvoyl-containing alpha subunit. It depends on pyruvate as a cofactor. Is synthesized initially as an inactive proenzyme. Formation of the active enzyme involves a self-maturation process in which the active site pyruvoyl group is generated from an internal serine residue via an autocatalytic post-translational modification. Two non-identical subunits are generated from the proenzyme in this reaction, and the pyruvate is formed at the N-terminus of the alpha chain, which is derived from the carboxyl end of the proenzyme. The autoendoproteolytic cleavage occurs by a canonical serine protease mechanism, in which the side chain hydroxyl group of the serine supplies its oxygen atom to form the C-terminus of the beta chain, while the remainder of the serine residue undergoes an oxidative deamination to produce ammonia and the pyruvoyl prosthetic group on the alpha chain. During this reaction, the Ser that is part of the protease active site of the proenzyme becomes the pyruvoyl prosthetic group, which constitutes an essential element of the active site of the mature decarboxylase.

Its subcellular location is the cell membrane. It carries out the reaction a 1,2-diacyl-sn-glycero-3-phospho-L-serine + H(+) = a 1,2-diacyl-sn-glycero-3-phosphoethanolamine + CO2. It participates in phospholipid metabolism; phosphatidylethanolamine biosynthesis; phosphatidylethanolamine from CDP-diacylglycerol: step 2/2. Catalyzes the formation of phosphatidylethanolamine (PtdEtn) from phosphatidylserine (PtdSer). In Bordetella parapertussis (strain 12822 / ATCC BAA-587 / NCTC 13253), this protein is Phosphatidylserine decarboxylase proenzyme.